We begin with the raw amino-acid sequence, 341 residues long: L-threonine 3-dehydrogenase (341 aa).

Cysteine 38 contacts Zn(2+). Active-site charge relay system residues include threonine 40 and histidine 43. Residues histidine 63, glutamate 64, cysteine 93, cysteine 96, cysteine 99, and cysteine 107 each contribute to the Zn(2+) site. Residues isoleucine 175, aspartate 195, arginine 200, 262–264 (LGI), and 286–287 (IY) contribute to the NAD(+) site.

Belongs to the zinc-containing alcohol dehydrogenase family. In terms of assembly, homotetramer. The cofactor is Zn(2+).

Its subcellular location is the cytoplasm. The enzyme catalyses L-threonine + NAD(+) = (2S)-2-amino-3-oxobutanoate + NADH + H(+). It participates in amino-acid degradation; L-threonine degradation via oxydo-reductase pathway; glycine from L-threonine: step 1/2. Functionally, catalyzes the NAD(+)-dependent oxidation of L-threonine to 2-amino-3-ketobutyrate. This is L-threonine 3-dehydrogenase from Salmonella typhi.